Consider the following 268-residue polypeptide: Energy-coupling factor transporter transmembrane protein EcfT (268 aa).

The next 5 membrane-spanning stretches (helical) occupy residues 26–46 (IVTF…TYAW), 72–92 (IFWL…GTPI), 106–126 (ILNA…STIL), 149–169 (IGVP…FVPL), and 247–267 (VAFA…TWLH).

This sequence belongs to the energy-coupling factor EcfT family. As to quaternary structure, forms a stable energy-coupling factor (ECF) transporter complex composed of 2 membrane-embedded substrate-binding proteins (S component), 2 ATP-binding proteins (A component) and 2 transmembrane proteins (T component). May be able to interact with more than 1 S component at a time.

The protein resides in the cell membrane. Its function is as follows. Transmembrane (T) component of an energy-coupling factor (ECF) ABC-transporter complex. Unlike classic ABC transporters this ECF transporter provides the energy necessary to transport a number of different substrates. The protein is Energy-coupling factor transporter transmembrane protein EcfT of Leuconostoc gelidum subsp. gasicomitatum (strain DSM 15947 / CCUG 46042 / CECT 5767 / JCM 12535 / LMG 18811 / NBRC 113245 / TB1-10) (Leuconostoc gasicomitatum).